Here is a 213-residue protein sequence, read N- to C-terminus: MEFLLDSANPEEIRQAWAMGVIGGITTNPSLVAKEGRDFHQLLQELVQIVNGPISAEVIALDTEGMLGEARELAAMHPNIVVKIPMTEEGLKAVKVLKAEGIKTNVTLVFSAVQALLAARAGATYVSPFLGRLDDIGENGLLLLADICEVFGVHGLETKVIAASIRNPVHVTEAAKIGADYATVPFNVLCQLFKHPLTEAGIKKFLADWQKLK.

Lys-83 (schiff-base intermediate with substrate) is an active-site residue.

Belongs to the transaldolase family. Type 3B subfamily.

Its subcellular location is the cytoplasm. It carries out the reaction D-sedoheptulose 7-phosphate + D-glyceraldehyde 3-phosphate = D-erythrose 4-phosphate + beta-D-fructose 6-phosphate. It functions in the pathway carbohydrate degradation; pentose phosphate pathway; D-glyceraldehyde 3-phosphate and beta-D-fructose 6-phosphate from D-ribose 5-phosphate and D-xylulose 5-phosphate (non-oxidative stage): step 2/3. In terms of biological role, transaldolase is important for the balance of metabolites in the pentose-phosphate pathway. This Desulfitobacterium hafniense (strain DSM 10664 / DCB-2) protein is Probable transaldolase.